The chain runs to 382 residues: Pentraxin-related protein PTX3 (382 aa).

An N-terminal signal peptide occupies residues 1-17 (MHISVILFCALWSAVSA). Residues 79-137 (VMLRGELQKLQAELGRLEGSLQKLCGPEAPSETRLARALDDLLQASRDAGRRLARLEDA) are a coiled coil. 2 disulfide bridges follow: C180-C358 and C211-C272. The Pentraxin (PTX) domain maps to 180 to 382 (CETAILFPMR…QPHGGAQYVY (203 aa)). An N-linked (GlcNAc...) asparagine glycan is attached at N221.

As to quaternary structure, homooctamer; disulfide-linked. Binds to C1q.

The protein resides in the secreted. Functionally, plays a role in the regulation of innate resistance to pathogens, inflammatory reactions, possibly clearance of self-components and female fertility. In Bos taurus (Bovine), this protein is Pentraxin-related protein PTX3 (PTX3).